A 366-amino-acid polypeptide reads, in one-letter code: tRNA(Met) cytidine acetate ligase (366 aa).

Residues 7–20, G96, N152, and R175 each bind ATP; that span reads IAEF…HKYL.

It belongs to the TmcAL family.

It localises to the cytoplasm. It carries out the reaction cytidine(34) in elongator tRNA(Met) + acetate + ATP = N(4)-acetylcytidine(34) in elongator tRNA(Met) + AMP + diphosphate. Catalyzes the formation of N(4)-acetylcytidine (ac(4)C) at the wobble position of elongator tRNA(Met), using acetate and ATP as substrates. First activates an acetate ion to form acetyladenylate (Ac-AMP) and then transfers the acetyl group to tRNA to form ac(4)C34. The protein is tRNA(Met) cytidine acetate ligase of Streptococcus mutans serotype c (strain ATCC 700610 / UA159).